Consider the following 310-residue polypeptide: Ribose-phosphate pyrophosphokinase (310 aa).

ATP-binding positions include 34–36 (DQE) and 93–94 (RQ). Residues histidine 127 and aspartate 167 each coordinate Mg(2+). Residue lysine 190 is part of the active site. D-ribose 5-phosphate is bound by residues arginine 192, aspartate 216, and 220–224 (DSGGT).

This sequence belongs to the ribose-phosphate pyrophosphokinase family. Class I subfamily. In terms of assembly, homohexamer. Requires Mg(2+) as cofactor.

The protein localises to the cytoplasm. It carries out the reaction D-ribose 5-phosphate + ATP = 5-phospho-alpha-D-ribose 1-diphosphate + AMP + H(+). It participates in metabolic intermediate biosynthesis; 5-phospho-alpha-D-ribose 1-diphosphate biosynthesis; 5-phospho-alpha-D-ribose 1-diphosphate from D-ribose 5-phosphate (route I): step 1/1. In terms of biological role, involved in the biosynthesis of the central metabolite phospho-alpha-D-ribosyl-1-pyrophosphate (PRPP) via the transfer of pyrophosphoryl group from ATP to 1-hydroxyl of ribose-5-phosphate (Rib-5-P). In Rhizobium meliloti (strain 1021) (Ensifer meliloti), this protein is Ribose-phosphate pyrophosphokinase.